We begin with the raw amino-acid sequence, 316 residues long: WSCD family member GA21586 (316 aa).

The helical transmembrane segment at 8–28 (FFGVSATIIIYIGGVLFLSMN) threads the bilayer. Asn-78, Asn-150, Asn-226, and Asn-232 each carry an N-linked (GlcNAc...) asparagine glycan.

Belongs to the WSCD family.

Its subcellular location is the membrane. The polypeptide is WSCD family member GA21586 (Drosophila pseudoobscura pseudoobscura (Fruit fly)).